The primary structure comprises 263 residues: HTH-type transcriptional repressor NanR (263 aa).

Residues 1–22 form a disordered region; the sequence is MGLMNAFDSQTEDSSPAIGRNL. The HTH gntR-type domain occupies 30–98; that stretch reads KKLSEMVEEE…NGERARVSRP (69 aa). A DNA-binding region (H-T-H motif) is located at residues 58 to 77; sequence ERELMAFFNVGRPSVREALA.

Belongs to the NanR family.

Functionally, transcriptional repressor that controls expression of the genes required for the catabolism of sialic acids. This chain is HTH-type transcriptional repressor NanR, found in Escherichia coli (strain 55989 / EAEC).